Consider the following 529-residue polypeptide: Nucleolar protein 58 (529 aa).

Thr-34 carries the post-translational modification Phosphothreonine. The residue at position 109 (Ser-109) is a Phosphoserine. The interval 155–400 is sufficient for interaction with NOPCHAP1; the sequence is ADKVDTMIVQ…LEARLRTLED (246 aa). Lys-157 participates in a covalent cross-link: Glycyl lysine isopeptide (Lys-Gly) (interchain with G-Cter in SUMO2). In terms of domain architecture, Nop spans 282–400; that stretch reads IAPNVTVMVG…LEARLRTLED (119 aa). Residues Ser-304 and Ser-351 each carry the phosphoserine modification. Residues Lys-353, Lys-411, Lys-415, Lys-422, Lys-426, Lys-441, Lys-444, and Lys-465 each participate in a glycyl lysine isopeptide (Lys-Gly) (interchain with G-Cter in SUMO2) cross-link. The tract at residues 409–529 is disordered; that stretch reads TGKALAKTEK…KKKKKRENED (121 aa). Basic and acidic residues predominate over residues 414–427; it reads AKTEKYEHKSEVKT. Residue Lys-467 forms a Glycyl lysine isopeptide (Lys-Gly) (interchain with G-Cter in SUMO); alternate linkage. Lys-467 participates in a covalent cross-link: Glycyl lysine isopeptide (Lys-Gly) (interchain with G-Cter in SUMO1); alternate. Residue Lys-467 forms a Glycyl lysine isopeptide (Lys-Gly) (interchain with G-Cter in SUMO2); alternate linkage. Residues 469-481 show a composition bias toward acidic residues; sequence EEEEEEKVAEEEE. Ser-483 is modified (phosphoserine). Lys-485 is covalently cross-linked (Glycyl lysine isopeptide (Lys-Gly) (interchain with G-Cter in SUMO2)). The segment covering 485–495 has biased composition (basic residues); sequence KKKKKRGKKKH. A Glycyl lysine isopeptide (Lys-Gly) (interchain with G-Cter in SUMO); alternate cross-link involves residue Lys-497. Residue Lys-497 forms a Glycyl lysine isopeptide (Lys-Gly) (interchain with G-Cter in SUMO2); alternate linkage. A phosphoserine mark is found at Ser-502 and Ser-514. The span at 517 to 529 shows a compositional bias: basic residues; that stretch reads KKKKKKKKRENED.

This sequence belongs to the NOP5/NOP56 family. Core component of box C/D small nucleolar ribonucleoprotein (snoRNP) particles; the core proteins SNU13, NOP56, NOP58 and FBL or FBLL1 assemble stepwise onto the snoRNA. Interacts with NOLC1/Nopp140. Interacts with NOPCHAP1, NUFIP1, RUVBL1 and RUVBL2; NOPCHAP1 bridges the association of NOP58 with RUVBL1:RUVBL2 and NUFIP1. Interacts with PIH1D1. Part of the small subunit (SSU) processome, composed of more than 70 proteins and the RNA chaperone small nucleolar RNA (snoRNA) U3. Post-translationally, sumoylation is essential for high-affinity binding to snoRNAs. Ubiquitous.

It is found in the nucleus. The protein localises to the nucleolus. Its subcellular location is the nucleoplasm. Its function is as follows. Required for the biogenesis of box C/D snoRNAs such as U3, U8 and U14 snoRNAs. Part of the small subunit (SSU) processome, first precursor of the small eukaryotic ribosomal subunit. During the assembly of the SSU processome in the nucleolus, many ribosome biogenesis factors, an RNA chaperone and ribosomal proteins associate with the nascent pre-rRNA and work in concert to generate RNA folding, modifications, rearrangements and cleavage as well as targeted degradation of pre-ribosomal RNA by the RNA exosome. Core component of box C/D small nucleolar ribonucleoprotein (snoRNP) complexes that function in methylation of multiple sites on ribosomal RNAs (rRNAs) and messenger RNAs (mRNAs). The polypeptide is Nucleolar protein 58 (Homo sapiens (Human)).